The primary structure comprises 295 residues: RNA polymerase sigma-C factor (295 aa).

A Polymerase core binding motif is present at residues 73-86; sequence DLIQEANIGLMKAV. Positions 250–269 form a DNA-binding region, H-T-H motif; it reads LSELGEHFGFSRERARQLEI.

The protein belongs to the sigma-70 factor family.

In terms of biological role, sigma factors are initiation factors that promote the attachment of RNA polymerase to specific initiation sites and are then released. This sigma factor is essential for normal fruiting body formation. This chain is RNA polymerase sigma-C factor (sigC), found in Myxococcus xanthus.